A 168-amino-acid chain; its full sequence is Shikimate kinase (168 aa).

10–15 (CSGKST) is an ATP binding site. Ser14 contributes to the Mg(2+) binding site. Residues Asp32, Arg56, and Gly78 each coordinate substrate. Arg116 serves as a coordination point for ATP. Arg133 provides a ligand contact to substrate.

The protein belongs to the shikimate kinase family. Monomer. Mg(2+) is required as a cofactor.

The protein localises to the cytoplasm. The catalysed reaction is shikimate + ATP = 3-phosphoshikimate + ADP + H(+). It participates in metabolic intermediate biosynthesis; chorismate biosynthesis; chorismate from D-erythrose 4-phosphate and phosphoenolpyruvate: step 5/7. Its function is as follows. Catalyzes the specific phosphorylation of the 3-hydroxyl group of shikimic acid using ATP as a cosubstrate. The polypeptide is Shikimate kinase (Aquifex aeolicus (strain VF5)).